A 231-amino-acid chain; its full sequence is MKIGIIGAMEQEVAILKAAISDITEVNKGGCTFFSGQLNGVDVVLLQSGIGKVAAAVGTSILLSEYQPDVVLNTGSAGGFDSTLNLGDVVISTEVRHHDADVTAFGYEIGQMAGQPAAFKADDKLMAVAEQALAQMEDKHAVRGLICTGDAFVCTAERQEFIRKHFPSVVAVEMEASAIAQACHQFQVPFVVVRAISDVADKESPMSFEEFLPLAAQSSSEMVIKMVALLK.

The Proton acceptor role is filled by glutamate 12. Substrate-binding positions include glycine 78, valine 153, and 174 to 175; that span reads ME. Residue aspartate 198 is the Proton donor of the active site.

The protein belongs to the PNP/UDP phosphorylase family. MtnN subfamily.

It carries out the reaction S-adenosyl-L-homocysteine + H2O = S-(5-deoxy-D-ribos-5-yl)-L-homocysteine + adenine. The catalysed reaction is S-methyl-5'-thioadenosine + H2O = 5-(methylsulfanyl)-D-ribose + adenine. It catalyses the reaction 5'-deoxyadenosine + H2O = 5-deoxy-D-ribose + adenine. The protein operates within amino-acid biosynthesis; L-methionine biosynthesis via salvage pathway; S-methyl-5-thio-alpha-D-ribose 1-phosphate from S-methyl-5'-thioadenosine (hydrolase route): step 1/2. Catalyzes the irreversible cleavage of the glycosidic bond in both 5'-methylthioadenosine (MTA) and S-adenosylhomocysteine (SAH/AdoHcy) to adenine and the corresponding thioribose, 5'-methylthioribose and S-ribosylhomocysteine, respectively. Also cleaves 5'-deoxyadenosine, a toxic by-product of radical S-adenosylmethionine (SAM) enzymes, into 5-deoxyribose and adenine. The chain is 5'-methylthioadenosine/S-adenosylhomocysteine nucleosidase from Vibrio atlanticus (strain LGP32) (Vibrio splendidus (strain Mel32)).